A 123-amino-acid polypeptide reads, in one-letter code: uncharacterized protein (123 aa).

The chain crosses the membrane as a helical span at residues 14–34 (VVLKITAVVCSVFSIRVLILA).

The protein localises to the membrane. This is an uncharacterized protein from Saccharomyces cerevisiae (strain ATCC 204508 / S288c) (Baker's yeast).